The chain runs to 744 residues: Catalase-peroxidase 3 (744 aa).

Positions W106–Y228 form a cross-link, tryptophyl-tyrosyl-methioninium (Trp-Tyr) (with M-254). The Proton acceptor role is filled by H107. The tryptophyl-tyrosyl-methioninium (Tyr-Met) (with W-106) cross-link spans Y228–M254. H269 lines the heme b pocket.

Belongs to the peroxidase family. Peroxidase/catalase subfamily. As to quaternary structure, homodimer or homotetramer. Heme b serves as cofactor. In terms of processing, formation of the three residue Trp-Tyr-Met cross-link is important for the catalase, but not the peroxidase activity of the enzyme.

The enzyme catalyses H2O2 + AH2 = A + 2 H2O. It carries out the reaction 2 H2O2 = O2 + 2 H2O. Functionally, bifunctional enzyme with both catalase and broad-spectrum peroxidase activity. This is Catalase-peroxidase 3 from Mycolicibacterium smegmatis (strain ATCC 700084 / mc(2)155) (Mycobacterium smegmatis).